The primary structure comprises 247 residues: 1-(5-phosphoribosyl)-5-[(5-phosphoribosylamino)methylideneamino] imidazole-4-carboxamide isomerase (247 aa).

Asp-8 functions as the Proton acceptor in the catalytic mechanism. Residue Asp-131 is the Proton donor of the active site.

It belongs to the HisA/HisF family.

It localises to the cytoplasm. It catalyses the reaction 1-(5-phospho-beta-D-ribosyl)-5-[(5-phospho-beta-D-ribosylamino)methylideneamino]imidazole-4-carboxamide = 5-[(5-phospho-1-deoxy-D-ribulos-1-ylimino)methylamino]-1-(5-phospho-beta-D-ribosyl)imidazole-4-carboxamide. It participates in amino-acid biosynthesis; L-histidine biosynthesis; L-histidine from 5-phospho-alpha-D-ribose 1-diphosphate: step 4/9. The sequence is that of 1-(5-phosphoribosyl)-5-[(5-phosphoribosylamino)methylideneamino] imidazole-4-carboxamide isomerase from Methylobacillus flagellatus (strain ATCC 51484 / DSM 6875 / VKM B-1610 / KT).